A 397-amino-acid chain; its full sequence is Digeranylgeranylglycerophospholipid reductase 3 (397 aa).

Positions 16, 35, 46, 47, 49, 102, 126, 283, 295, and 296 each coordinate FAD. A 2,3-bis-O-(geranylgeranyl)-sn-glycerol 1-phospholipid is bound at residue Lys338.

Belongs to the geranylgeranyl reductase family. DGGGPL reductase subfamily. Requires FAD as cofactor.

It carries out the reaction a 2,3-bis-O-phytanyl-sn-glycerol 1-phospholipid + 8 A = a 2,3-bis-O-(geranylgeranyl)-sn-glycerol 1-phospholipid + 8 AH2. It catalyses the reaction 2,3-bis-O-(phytanyl)-sn-glycerol 1-phosphate + 8 A = 2,3-bis-O-(geranylgeranyl)-sn-glycerol 1-phosphate + 8 AH2. The catalysed reaction is CDP-2,3-bis-O-(geranylgeranyl)-sn-glycerol + 8 AH2 = CDP-2,3-bis-O-(phytanyl)-sn-glycerol + 8 A. The enzyme catalyses archaetidylserine + 8 AH2 = 2,3-bis-O-phytanyl-sn-glycero-3-phospho-L-serine + 8 A. Its pathway is membrane lipid metabolism; glycerophospholipid metabolism. Its function is as follows. Is involved in the reduction of 2,3-digeranylgeranylglycerophospholipids (unsaturated archaeols) into 2,3-diphytanylglycerophospholipids (saturated archaeols) in the biosynthesis of archaeal membrane lipids. Catalyzes the formation of archaetidic acid (2,3-di-O-phytanyl-sn-glyceryl phosphate) from 2,3-di-O-geranylgeranylglyceryl phosphate (DGGGP) via the hydrogenation of each double bond of the isoprenoid chains. Is also probably able to reduce double bonds of geranyl groups in CDP-2,3-bis-O-(geranylgeranyl)-sn-glycerol and archaetidylserine, thus acting at various stages in the biosynthesis of archaeal membrane lipids. This is Digeranylgeranylglycerophospholipid reductase 3 from Methanosphaera stadtmanae (strain ATCC 43021 / DSM 3091 / JCM 11832 / MCB-3).